A 306-amino-acid polypeptide reads, in one-letter code: Ornithine carbamoyltransferase (306 aa).

Carbamoyl phosphate-binding positions include 46 to 49, glutamine 73, arginine 97, and 124 to 127; these read STRT and HPTQ. L-ornithine-binding positions include asparagine 156, aspartate 220, and 224–225; that span reads SM. Carbamoyl phosphate contacts are provided by residues 260 to 261 and arginine 288; that span reads CL.

It belongs to the aspartate/ornithine carbamoyltransferase superfamily. OTCase family.

It localises to the cytoplasm. The enzyme catalyses carbamoyl phosphate + L-ornithine = L-citrulline + phosphate + H(+). It functions in the pathway amino-acid degradation; L-arginine degradation via ADI pathway; carbamoyl phosphate from L-arginine: step 2/2. In terms of biological role, reversibly catalyzes the transfer of the carbamoyl group from carbamoyl phosphate (CP) to the N(epsilon) atom of ornithine (ORN) to produce L-citrulline. The protein is Ornithine carbamoyltransferase of Campylobacter jejuni subsp. jejuni serotype O:6 (strain 81116 / NCTC 11828).